We begin with the raw amino-acid sequence, 170 residues long: Putative apoptosis inhibitor ORF87 (170 aa).

BIR repeat units follow at residues 22 to 92 (RIKS…PVGK) and 104 to 169 (RLKS…KLSS).

May act as an apoptosis inhibitor. This Ostreid herpesvirus 1 (isolate France) (OsHV-1) protein is Putative apoptosis inhibitor ORF87.